Here is a 232-residue protein sequence, read N- to C-terminus: Ribonuclease 3 (232 aa).

One can recognise an RNase III domain in the interval 10–135 (ALKIYEATGY…LIGAMYMDGG (126 aa)). Mg(2+) is bound at residue E48. The active site involves D52. Mg(2+) contacts are provided by N121 and E124. E124 is a catalytic residue. Residues 161–230 (DPKTALQEWV…AKLMLKKITE (70 aa)) enclose the DRBM domain.

The protein belongs to the ribonuclease III family. Homodimer. Mg(2+) serves as cofactor.

It is found in the cytoplasm. It carries out the reaction Endonucleolytic cleavage to 5'-phosphomonoester.. In terms of biological role, digests double-stranded RNA. Involved in the processing of primary rRNA transcript to yield the immediate precursors to the large and small rRNAs (23S and 16S). Processes some mRNAs, and tRNAs when they are encoded in the rRNA operon. Processes pre-crRNA and tracrRNA of type II CRISPR loci if present in the organism. This chain is Ribonuclease 3, found in Anaplasma marginale (strain Florida).